We begin with the raw amino-acid sequence, 220 residues long: Uracil-DNA glycosylase (220 aa).

Residue Asp60 is the Proton acceptor of the active site.

Belongs to the uracil-DNA glycosylase (UDG) superfamily. UNG family.

It localises to the cytoplasm. The catalysed reaction is Hydrolyzes single-stranded DNA or mismatched double-stranded DNA and polynucleotides, releasing free uracil.. Excises uracil residues from the DNA which can arise as a result of misincorporation of dUMP residues by DNA polymerase or due to deamination of cytosine. This chain is Uracil-DNA glycosylase, found in Francisella tularensis subsp. holarctica (strain FTNF002-00 / FTA).